A 237-amino-acid chain; its full sequence is Leucyl/phenylalanyl-tRNA--protein transferase (237 aa).

This sequence belongs to the L/F-transferase family.

The protein resides in the cytoplasm. It catalyses the reaction N-terminal L-lysyl-[protein] + L-leucyl-tRNA(Leu) = N-terminal L-leucyl-L-lysyl-[protein] + tRNA(Leu) + H(+). It carries out the reaction N-terminal L-arginyl-[protein] + L-leucyl-tRNA(Leu) = N-terminal L-leucyl-L-arginyl-[protein] + tRNA(Leu) + H(+). The enzyme catalyses L-phenylalanyl-tRNA(Phe) + an N-terminal L-alpha-aminoacyl-[protein] = an N-terminal L-phenylalanyl-L-alpha-aminoacyl-[protein] + tRNA(Phe). Functions in the N-end rule pathway of protein degradation where it conjugates Leu, Phe and, less efficiently, Met from aminoacyl-tRNAs to the N-termini of proteins containing an N-terminal arginine or lysine. The sequence is that of Leucyl/phenylalanyl-tRNA--protein transferase from Aromatoleum aromaticum (strain DSM 19018 / LMG 30748 / EbN1) (Azoarcus sp. (strain EbN1)).